The chain runs to 70 residues: Large ribosomal subunit protein uL29 (70 aa).

The protein belongs to the universal ribosomal protein uL29 family.

This is Large ribosomal subunit protein uL29 from Prochlorococcus marinus (strain NATL1A).